Reading from the N-terminus, the 1002-residue chain is Mitogen-activated protein kinase kinase kinase 21 (1002 aa).

The segment at 1–26 (MALPVAEGTADTPLSPARDDSGSTSS) is disordered. An SH3 domain is found at 24–88 (TSSGMWAALY…PASYVAPCGP (65 aa)). Residues 110 to 390 (LELKELIGAG…QLTAIEEAVL (281 aa)) form the Protein kinase domain. Residues 116-124 (IGAGGFGQV) and K137 contribute to the ATP site. D247 acts as the Proton acceptor in catalysis. T283 carries the phosphothreonine; by autocatalysis modification. Phosphoserine; by autocatalysis and MAP4K1 is present on S287. Leucine-zipper stretches follow at residues 409 to 430 (IQQMFSELRTKEKELRSREEEL) and 444 to 466 (LRRREQQLAEREIDVLERELNVL). Disordered regions lie at residues 508–531 (TVQASPTLDKRRSSDSGLCSPPGS), 574–604 (GCTWGPSSVQTKERPEGRERVRPLSDGNSPW), 640–689 (HRKP…VGAP), 721–778 (AQAP…SHSS), 797–823 (LGNARDLCGPTTLTPDPGSAAPESGCE), and 878–899 (QSAPEDSGLPHSPSPGPQRDLA). 3 positions are modified to phosphoserine: S512, S527, and S531. T576 is modified (phosphothreonine). The segment covering 584 to 596 (TKERPEGRERVRP) has biased composition (basic and acidic residues). S598 carries the post-translational modification Phosphoserine. Positions 661–677 (DSQREDSSEAESREEGS) are enriched in basic and acidic residues. 2 stretches are compositionally biased toward low complexity: residues 740–758 (QPASRCQSSPSSLLRQPSA) and 766–778 (STLLLPSAPSHSS).

The protein belongs to the protein kinase superfamily. STE Ser/Thr protein kinase family. MAP kinase kinase kinase subfamily. As to quaternary structure, homodimer. Interacts with TLR4. Mg(2+) serves as cofactor. Post-translationally, autophosphorylation on serine and threonine residues within the activation loop plays a role in enzyme activation.

It catalyses the reaction L-seryl-[protein] + ATP = O-phospho-L-seryl-[protein] + ADP + H(+). The enzyme catalyses L-threonyl-[protein] + ATP = O-phospho-L-threonyl-[protein] + ADP + H(+). Homodimerization via the leucine zipper domains is required for autophosphorylation and subsequent activation. Functionally, negative regulator of TLR4 signaling. Does not activate JNK1/MAPK8 pathway, p38/MAPK14, nor ERK2/MAPK1 pathways. The polypeptide is Mitogen-activated protein kinase kinase kinase 21 (Map3k21) (Mus musculus (Mouse)).